Here is a 49-residue protein sequence, read N- to C-terminus: Osteocalcin (49 aa).

At Q1 the chain carries Pyrrolidone carboxylic acid. The Gla domain maps to 1 to 47 (QLINGQGAPAPYPDPLEPKREVCELNPDCDELADQVGLQDAYQRFYG). P9 bears the 4-hydroxyproline mark. Ca(2+)-binding residues include E17, E21, E24, and D30. A 4-carboxyglutamate mark is found at E17, E21, and E24. Residues C23 and C29 are joined by a disulfide bond.

Belongs to the osteocalcin/matrix Gla protein family. Gamma-carboxyglutamate residues are formed by vitamin K dependent carboxylation by GGCX. These residues are essential for the binding of calcium. Decarboxylation promotes the hormone activity.

The protein localises to the secreted. Its function is as follows. The carboxylated form is one of the main organic components of the bone matrix, which constitutes 1-2% of the total bone protein: it acts as a negative regulator of bone formation and is required to limit bone formation without impairing bone resorption or mineralization. The carboxylated form binds strongly to apatite and calcium. In terms of biological role, the uncarboxylated form acts as a hormone secreted by osteoblasts, which regulates different cellular processes, such as energy metabolism, male fertility and brain development. Regulates of energy metabolism by acting as a hormone favoring pancreatic beta-cell proliferation, insulin secretion and sensitivity and energy expenditure. Uncarboxylated osteocalcin hormone also promotes testosterone production in the testes: acts as a ligand for G protein-coupled receptor GPRC6A at the surface of Leydig cells, initiating a signaling response that promotes the expression of enzymes required for testosterone synthesis in a CREB-dependent manner. Also acts as a regulator of brain development: osteocalcin hormone crosses the blood-brain barrier and acts as a ligand for GPR158 on neurons, initiating a signaling response that prevents neuronal apoptosis in the hippocampus, favors the synthesis of all monoamine neurotransmitters and inhibits that of gamma-aminobutyric acid (GABA). Osteocalcin also crosses the placenta during pregnancy and maternal osteocalcin is required for fetal brain development. The sequence is that of Osteocalcin (BGLAP) from Oryctolagus cuniculus (Rabbit).